Reading from the N-terminus, the 124-residue chain is Fluoride-specific ion channel FluC (124 aa).

4 consecutive transmembrane segments (helical) span residues 3–23, 34–54, 68–88, and 100–120; these read VLLI…VSNL, IGTL…FIFI, LLLI…IETF, and ALNV…GVLI. Na(+) contacts are provided by Gly75 and Thr78.

Belongs to the fluoride channel Fluc/FEX (TC 1.A.43) family.

It localises to the cell inner membrane. It catalyses the reaction fluoride(in) = fluoride(out). Na(+) is not transported, but it plays an essential structural role and its presence is essential for fluoride channel function. Fluoride-specific ion channel. Important for reducing fluoride concentration in the cell, thus reducing its toxicity. The protein is Fluoride-specific ion channel FluC of Coxiella burnetii (strain Dugway 5J108-111).